The chain runs to 507 residues: Arylsulfatase A (507 aa).

The signal sequence occupies residues 1–18; the sequence is MEALWTLTLALAAGLAAA. The Ca(2+) site is built by Asp29, Asp30, and Cys69. Cys69 acts as the Nucleophile in catalysis. Cys69 is modified (3-oxoalanine (Cys)). Substrate is bound at residue Lys123. The active site involves His125. Substrate is bound at residue Ser150. Intrachain disulfides connect Cys156/Cys172 and Cys161/Cys168. Asn158 carries an N-linked (GlcNAc...) asparagine glycan. A glycan (N-linked (GlcNAc...) asparagine) is linked at Asn184. A substrate-binding site is contributed by His229. 2 residues coordinate Ca(2+): Asp281 and Asn282. Intrachain disulfides connect Cys300–Cys414, Cys488–Cys500, Cys489–Cys502, and Cys493–Cys499. Lys302 provides a ligand contact to substrate. N-linked (GlcNAc...) asparagine glycosylation occurs at Asn350.

Belongs to the sulfatase family. As to quaternary structure, homodimer at neutral pH and homooctamer at acidic pH. Exists both as a single chain of 58 kDa (component A) or as a chain of 50 kDa (component B) linked by disulfide bond(s) to a 7 kDa chain (component C). Interacts with SUMF1. The cofactor is Ca(2+). In terms of processing, the conversion to 3-oxoalanine (also known as C-formylglycine, FGly), of a serine or cysteine residue in prokaryotes and of a cysteine residue in eukaryotes, is critical for catalytic activity. This post-translational modification is severely defective in multiple sulfatase deficiency (MSD).

It localises to the endoplasmic reticulum. Its subcellular location is the lysosome. The enzyme catalyses an N-acyl-1-beta-D-(3-O-sulfo)-galactosyl-sphing-4-enine + H2O = a beta-D-galactosyl-(1&lt;-&gt;1')-N-acylsphing-4-enine + sulfate + H(+). Hydrolyzes cerebroside sulfate. The protein is Arylsulfatase A (ARSA) of Bos taurus (Bovine).